The sequence spans 159 residues: S-ribosylhomocysteine lyase (159 aa).

Fe cation contacts are provided by histidine 53, histidine 57, and cysteine 124.

The protein belongs to the LuxS family. Homodimer. The cofactor is Fe cation.

The catalysed reaction is S-(5-deoxy-D-ribos-5-yl)-L-homocysteine = (S)-4,5-dihydroxypentane-2,3-dione + L-homocysteine. Its function is as follows. Involved in the synthesis of autoinducer 2 (AI-2) which is secreted by bacteria and is used to communicate both the cell density and the metabolic potential of the environment. The regulation of gene expression in response to changes in cell density is called quorum sensing. Catalyzes the transformation of S-ribosylhomocysteine (RHC) to homocysteine (HC) and 4,5-dihydroxy-2,3-pentadione (DPD). The protein is S-ribosylhomocysteine lyase of Desulfotalea psychrophila (strain LSv54 / DSM 12343).